Here is a 96-residue protein sequence, read N- to C-terminus: Antitoxin TacA3 (96 aa).

The segment at 61-96 (YLTERDTKMIMEILDNPPAPNEKLLAAAFALPDMKK) is neutralization domain.

This sequence belongs to the TacA antitoxin family. Forms a complex with cognate toxin TacT3. Forms a 4:2 antitoxin:toxin complex with cognate toxin TacT3. Forms a 4:4 antitoxin:toxin complex with promoter DNA, where 2 TacT3 dimers bridge 2 TacA3 dimers. Only TacA3 contacts promoter DNA.

In terms of biological role, antitoxin component of a type II toxin-antitoxin (TA) system. Counteracts the toxic effect of cognate toxin TacT3, but not TacT1 or TacT2. Plays a role in persister cell formation. Functionally, the TacA3-TacT3 complex both represses and derepresses expression of its own operon. The hexameric 4:2 TacA3-TacT3 complex binds promoter DNA and represses its transcription; both subunits are required. The octomeric 4:4 TacA3-TacT3 complex derepresses the operon. The shift from hexameric to octomeric complex probably alters DNA-binding, leading to dissociation from the operator DNA and derepression. Does not bind the promoter of the TacA1-TacT1 operon. The sequence is that of Antitoxin TacA3 from Salmonella typhimurium (strain 14028s / SGSC 2262).